A 1449-amino-acid polypeptide reads, in one-letter code: DNA polymerase III PolC-type (1449 aa).

Residues 194-231 form a disordered region; it reads AQEKPVKKESSDNKHKSNGGNKGGYEKKSYKDEPKNEN. Basic and acidic residues-rich tracts occupy residues 197 to 208 and 217 to 229; these read KPVKKESSDNKH and GYEKKSYKDEPKN. The region spanning 435 to 590 is the Exonuclease domain; the sequence is YVVFDIETTG…DDAKATAEIL (156 aa).

The protein belongs to the DNA polymerase type-C family. PolC subfamily.

The protein resides in the cytoplasm. It carries out the reaction DNA(n) + a 2'-deoxyribonucleoside 5'-triphosphate = DNA(n+1) + diphosphate. In terms of biological role, required for replicative DNA synthesis. This DNA polymerase also exhibits 3' to 5' exonuclease activity. In Clostridium perfringens (strain 13 / Type A), this protein is DNA polymerase III PolC-type.